The following is a 169-amino-acid chain: E1B protein, small T-antigen (169 aa).

The protein belongs to the adenoviridae E1B 19 kDa protein family.

In Canis lupus familiaris (Dog), this protein is E1B protein, small T-antigen.